The following is a 420-amino-acid chain: UDP-N-acetylglucosamine 1-carboxyvinyltransferase (420 aa).

Phosphoenolpyruvate is bound at residue 22-23 (KN). R94 is a binding site for UDP-N-acetyl-alpha-D-glucosamine. Catalysis depends on C118, which acts as the Proton donor. Position 118 is a 2-(S-cysteinyl)pyruvic acid O-phosphothioketal (C118). 2 residues coordinate UDP-N-acetyl-alpha-D-glucosamine: D307 and I329.

It belongs to the EPSP synthase family. MurA subfamily.

Its subcellular location is the cytoplasm. The catalysed reaction is phosphoenolpyruvate + UDP-N-acetyl-alpha-D-glucosamine = UDP-N-acetyl-3-O-(1-carboxyvinyl)-alpha-D-glucosamine + phosphate. Its pathway is cell wall biogenesis; peptidoglycan biosynthesis. Functionally, cell wall formation. Adds enolpyruvyl to UDP-N-acetylglucosamine. This chain is UDP-N-acetylglucosamine 1-carboxyvinyltransferase, found in Granulibacter bethesdensis (strain ATCC BAA-1260 / CGDNIH1).